The chain runs to 360 residues: Histidinol-phosphate aminotransferase (360 aa).

N6-(pyridoxal phosphate)lysine is present on K218.

Belongs to the class-II pyridoxal-phosphate-dependent aminotransferase family. Histidinol-phosphate aminotransferase subfamily. Homodimer. Pyridoxal 5'-phosphate serves as cofactor.

It catalyses the reaction L-histidinol phosphate + 2-oxoglutarate = 3-(imidazol-4-yl)-2-oxopropyl phosphate + L-glutamate. Its pathway is amino-acid biosynthesis; L-histidine biosynthesis; L-histidine from 5-phospho-alpha-D-ribose 1-diphosphate: step 7/9. The chain is Histidinol-phosphate aminotransferase from Chlorobium phaeovibrioides (strain DSM 265 / 1930) (Prosthecochloris vibrioformis (strain DSM 265)).